The following is a 99-amino-acid chain: HTH-type transcriptional regulator YgaV (99 aa).

Residues 7–99 (LQASAEQAAA…IATLKNVYCP (93 aa)) form the HTH arsR-type domain. The H-T-H motif DNA-binding region spans 41–64 (AGELTRITGLSASATSQHLARMRD).

With respect to regulation, in the presence of H(2)S, two cysteine residues form an intramolecular tetrasulfide bond, which attenuates the binding of YgaV to DNA. Both unmodified YgaV and sulfide-modified YgaV can probably function as either a repressor or an activator. Binds heme, which may influence the DNA-binding affinity. Its function is as follows. Transcriptional regulator that regulates large-scale gene expression in response to sulfide. May act as a global regulator responsible for redox homeostasis. It functions as both a repressor and an activator. In the absence of sulfide compounds, it negatively regulates many anaerobic respiratory genes, including formate, fumarate, lactate, nitrate and nitrite reductase genes. In the presence of hydrogen sulfide (H(2)S), YgaV activity is attenuated, leading to the expression of anaerobic respiratory and ROS scavenging genes, which contributes to redox homeostasis, reactive oxygen species (ROS) scavenging and antibiotic tolerance. It responds to H(2)O(2) scavenging and increases antibiotic tolerance under H(2)S-atmospheric conditions. It also negatively regulates its own expression by binding to the ygaVP promoter region. May also be involved in regulatory mechanisms that operate independently of sulfide. In Escherichia coli (strain K12), this protein is HTH-type transcriptional regulator YgaV (ygaV).